We begin with the raw amino-acid sequence, 123 residues long: Alpha-lactalbumin (123 aa).

One can recognise a C-type lysozyme domain in the interval 1–123 (KQFTKCELSQ…KLEQWLCEKE (123 aa)). Cystine bridges form between Cys-6-Cys-120, Cys-28-Cys-111, Cys-61-Cys-77, and Cys-73-Cys-91. Residue Asn-45 is glycosylated (N-linked (GlcNAc...) asparagine). Positions 79, 82, 84, 87, and 88 each coordinate Ca(2+).

The protein belongs to the glycosyl hydrolase 22 family. Lactose synthase (LS) is a heterodimer of a catalytic component, beta1,4-galactosyltransferase (beta4Gal-T1) and a regulatory component, alpha-lactalbumin (LA). Mammary gland specific. Secreted in milk.

The protein localises to the secreted. In terms of biological role, regulatory subunit of lactose synthase, changes the substrate specificity of galactosyltransferase in the mammary gland making glucose a good acceptor substrate for this enzyme. This enables LS to synthesize lactose, the major carbohydrate component of milk. In other tissues, galactosyltransferase transfers galactose onto the N-acetylglucosamine of the oligosaccharide chains in glycoproteins. The protein is Alpha-lactalbumin (LALBA) of Papio cynocephalus (Yellow baboon).